The following is a 247-amino-acid chain: Probable transcriptional regulatory protein Hhal_2210 (247 aa).

This sequence belongs to the TACO1 family.

Its subcellular location is the cytoplasm. The protein is Probable transcriptional regulatory protein Hhal_2210 of Halorhodospira halophila (strain DSM 244 / SL1) (Ectothiorhodospira halophila (strain DSM 244 / SL1)).